A 160-amino-acid chain; its full sequence is NADH-quinone oxidoreductase subunit B (160 aa).

Positions 37, 38, 102, and 132 each coordinate [4Fe-4S] cluster.

It belongs to the complex I 20 kDa subunit family. In terms of assembly, NDH-1 is composed of 14 different subunits. Subunits NuoB, C, D, E, F, and G constitute the peripheral sector of the complex. It depends on [4Fe-4S] cluster as a cofactor.

The protein localises to the cell inner membrane. The catalysed reaction is a quinone + NADH + 5 H(+)(in) = a quinol + NAD(+) + 4 H(+)(out). Its function is as follows. NDH-1 shuttles electrons from NADH, via FMN and iron-sulfur (Fe-S) centers, to quinones in the respiratory chain. Couples the redox reaction to proton translocation (for every two electrons transferred, four hydrogen ions are translocated across the cytoplasmic membrane), and thus conserves the redox energy in a proton gradient. The sequence is that of NADH-quinone oxidoreductase subunit B from Neisseria gonorrhoeae (strain NCCP11945).